Consider the following 394-residue polypeptide: MSRELHDVDLAEVKPLVEKGESITGLLQEFDVQEQDIETLHGSLHVTLCGTPKGNRPVILTYHDIGMNHKTCYNPLFNSEDMQEITQHFAVCHVDAPGQQDGAPSFPVGYMYPSMDQLAEMLPGVLHQFGLKSVIGMGTGAGAYILTRFALNNPEMVEGLVLMNVNPCAEGWMDWAASKISGWTQALPDMVVSHLFGKEEIHNNVEVVHTYRQHILNDMNPSNLHLFISAYNSRRDLEIERPMPGTHTVTLQCPALLVVGDNSPAVDAVVECNSKLDPTKTTLLKMADCGGLPQISQPAKLAEAFKYFVQGMGYMPSASMTRLMRSRTASGSSVTSLEGTRSRSHTSEGPRSRSHTSEGSRSRSHTSEDARLNITPNSGATGNNAGPKSMEVSC.

Ser-2 carries the post-translational modification N-acetylserine. A phosphoserine mark is found at Ser-2, Ser-319, and Ser-326. The interval 325–394 (RSRTASGSSV…AGPKSMEVSC (70 aa)) is disordered. The segment covering 327–339 (RTASGSSVTSLEG) has biased composition (polar residues). Thr-328 carries the post-translational modification Phosphothreonine. Phosphoserine; by SGK1 is present on Ser-330. Phosphoserine is present on residues Ser-332 and Ser-333. At Thr-335 the chain carries Phosphothreonine. Ser-336 bears the Phosphoserine mark. Tandem repeats lie at residues 339 to 348 (GTRSRSHTSE), 349 to 358 (GPRSRSHTSE), and 359 to 368 (GSRSRSHTSE). Residues 339-368 (GTRSRSHTSEGPRSRSHTSEGSRSRSHTSE) form a 3 X 10 AA tandem repeats of G-[PST]-R-S-R-S-H-T-S-E region. A Phosphothreonine modification is found at Thr-340. Ser-342 is modified (phosphoserine). Residues 345-371 (HTSEGPRSRSHTSEGSRSRSHTSEDAR) show a composition bias toward basic and acidic residues. Thr-346 is modified (phosphothreonine; by SGK1). Ser-352 carries the post-translational modification Phosphoserine. Phosphothreonine; by SGK1 is present on Thr-356. Residues Ser-362 and Ser-364 each carry the phosphoserine modification. Thr-366 bears the Phosphothreonine; by SGK1 mark. Polar residues predominate over residues 374–386 (ITPNSGATGNNAG). Thr-375 carries the post-translational modification Phosphothreonine.

This sequence belongs to the NDRG family. In terms of assembly, interacts with RAB4A (membrane-bound form); the interaction involves NDRG1 in vesicular recycling of CDH1. Interacts with APOA1, APOA2, PRA1 and RTN1. Under stress conditions, phosphorylated in the C-terminal on many serine and threonine residues. Phosphorylated in vitro by PKA. Phosphorylation enhanced by increased intracellular cAMP levels. Homocysteine induces dephosphorylation. Phosphorylation by SGK1 is cell cycle dependent. As to expression, widely expressed, with highest levels in kidney followed by brain, pancreas, small intestine, colon and spleen (at protein level). Also detected in heart and preputial gland, and in much smaller quantities in other tissues. Not detected in duodenum and prostate. Highly expressed in Schwann cells.

It is found in the cytoplasm. The protein localises to the cytosol. It localises to the cytoskeleton. Its subcellular location is the microtubule organizing center. The protein resides in the centrosome. It is found in the nucleus. The protein localises to the cell membrane. Its function is as follows. Stress-responsive protein involved in hormone responses, cell growth, and differentiation. Acts as a tumor suppressor in many cell types. Necessary but not sufficient for p53/TP53-mediated caspase activation and apoptosis. Required for vesicular recycling of CDH1 and TF. May also function in lipid trafficking. Protects cells from spindle disruption damage. Functions in p53/TP53-dependent mitotic spindle checkpoint. Regulates microtubule dynamics and maintains euploidy. Has a role in cell trafficking notably of the Schwann cell and is necessary for the maintenance and development of the peripheral nerve myelin sheath. The sequence is that of Protein NDRG1 (Ndrg1) from Mus musculus (Mouse).